A 339-amino-acid chain; its full sequence is Protein H339R (339 aa).

The protein belongs to the asfivirus H339R family. As to quaternary structure, interacts with NACA (alpha chain of nascent polypeptide-associated complex).

It localises to the host cytoplasm. The protein localises to the host nucleus. It is found in the virion. The chain is Protein H339R from African swine fever virus (isolate Warthog/Namibia/Wart80/1980) (ASFV).